Here is a 213-residue protein sequence, read N- to C-terminus: MAQINVIGQNGGRSIDLDLPEVNPHVLHEVVTWQLAGRRRGTASTKTRAEVSRSGKKMYSQKGTGNARHGDRSVPTFVGGGVAFGPKPRSYSYTLPRKVRQLGLAMALADRQQQGKLTAVDGFGLDGKTKSFVSWAKENGLDGSERVLIVTDDELTRRAARNVAWATVLPVAGLNVYDILRHERLVIDAVALEPAQELETVPAEGNVQEGAAL.

Positions 41–75 (GTASTKTRAEVSRSGKKMYSQKGTGNARHGDRSVP) are disordered.

The protein belongs to the universal ribosomal protein uL4 family. As to quaternary structure, part of the 50S ribosomal subunit.

One of the primary rRNA binding proteins, this protein initially binds near the 5'-end of the 23S rRNA. It is important during the early stages of 50S assembly. It makes multiple contacts with different domains of the 23S rRNA in the assembled 50S subunit and ribosome. Its function is as follows. Forms part of the polypeptide exit tunnel. This is Large ribosomal subunit protein uL4 from Deinococcus geothermalis (strain DSM 11300 / CIP 105573 / AG-3a).